Consider the following 295-residue polypeptide: Protease HtpX (295 aa).

A run of 2 helical transmembrane segments spans residues 4 to 24 and 41 to 61; these read ILLFLATNLAVVLIASITLSL and SQLLVFCAVFGFAGSLFSLFI. A Zn(2+)-binding site is contributed by His147. The active site involves Glu148. Residue His151 coordinates Zn(2+). 2 helical membrane-spanning segments follow: residues 158–178 and 199–219; these read VTLALIQGVVNTFVMFFARII and IATIFAELVLGILASAIVMWF. Position 224 (Glu224) interacts with Zn(2+).

It belongs to the peptidase M48B family. Zn(2+) is required as a cofactor.

The protein resides in the cell inner membrane. This Pseudomonas fluorescens (strain Pf0-1) protein is Protease HtpX.